We begin with the raw amino-acid sequence, 447 residues long: Glutamate-1-semialdehyde 2,1-aminomutase (447 aa).

Lys272 carries the N6-(pyridoxal phosphate)lysine modification.

Belongs to the class-III pyridoxal-phosphate-dependent aminotransferase family. HemL subfamily. Homodimer. Pyridoxal 5'-phosphate serves as cofactor.

The protein resides in the cytoplasm. The enzyme catalyses (S)-4-amino-5-oxopentanoate = 5-aminolevulinate. The protein operates within porphyrin-containing compound metabolism; protoporphyrin-IX biosynthesis; 5-aminolevulinate from L-glutamyl-tRNA(Glu): step 2/2. This is Glutamate-1-semialdehyde 2,1-aminomutase from Leifsonia xyli subsp. xyli (strain CTCB07).